We begin with the raw amino-acid sequence, 432 residues long: 3-chlorobenzoate-3,4-dioxygenase oxygenase subunit (432 aa).

One can recognise a Rieske domain in the interval 27–133 (WIPALKSTEL…VKEMAGVVWV (107 aa)). Residues C69, H71, C88, and H91 each coordinate [2Fe-2S] cluster. Residues H180 and H185 each contribute to the Fe cation site.

It belongs to the bacterial ring-hydroxylating dioxygenase alpha subunit family. As to quaternary structure, this dioxygenase system consists of two proteins: an oxygenase and an oxygenase reductase. [2Fe-2S] cluster serves as cofactor. The cofactor is Fe cation.

The polypeptide is 3-chlorobenzoate-3,4-dioxygenase oxygenase subunit (cbaA) (Comamonas testosteroni (Pseudomonas testosteroni)).